The sequence spans 124 residues: Testis-expressed protein 54 (124 aa).

Basic and acidic residues predominate over residues 1–10; sequence MGCCQDKDFE. 2 disordered regions span residues 1-77 and 90-124; these read MGCC…SNES and FGRRGSSRPSKRQPDQIRKQESPIREGNQEEPEKG. Acidic residues predominate over residues 11 to 30; sequence MSDEQSKEEESEDGREDETT. 2 stretches are compositionally biased toward basic and acidic residues: residues 34–50 and 101–124; these read RGPRECERGLPEGRGEL and RQPDQIRKQESPIREGNQEEPEKG.

As to expression, expressed in Testis.

The sequence is that of Testis-expressed protein 54 from Homo sapiens (Human).